Here is a 307-residue protein sequence, read N- to C-terminus: Aspartate carbamoyltransferase catalytic subunit (307 aa).

The carbamoyl phosphate site is built by arginine 49 and threonine 50. Lysine 77 provides a ligand contact to L-aspartate. Carbamoyl phosphate is bound by residues arginine 99, histidine 127, and glutamine 130. Positions 160 and 211 each coordinate L-aspartate. Residues alanine 250 and proline 251 each contribute to the carbamoyl phosphate site.

The protein belongs to the aspartate/ornithine carbamoyltransferase superfamily. ATCase family. In terms of assembly, heterododecamer (2C3:3R2) of six catalytic PyrB chains organized as two trimers (C3), and six regulatory PyrI chains organized as three dimers (R2).

The catalysed reaction is carbamoyl phosphate + L-aspartate = N-carbamoyl-L-aspartate + phosphate + H(+). It participates in pyrimidine metabolism; UMP biosynthesis via de novo pathway; (S)-dihydroorotate from bicarbonate: step 2/3. Catalyzes the condensation of carbamoyl phosphate and aspartate to form carbamoyl aspartate and inorganic phosphate, the committed step in the de novo pyrimidine nucleotide biosynthesis pathway. The sequence is that of Aspartate carbamoyltransferase catalytic subunit from Bacillus pumilus (strain SAFR-032).